A 487-amino-acid chain; its full sequence is UDP-N-acetylmuramate--L-alanine ligase (487 aa).

Residue 129-135 coordinates ATP; sequence GTHGKTT.

Belongs to the MurCDEF family.

The protein localises to the cytoplasm. It carries out the reaction UDP-N-acetyl-alpha-D-muramate + L-alanine + ATP = UDP-N-acetyl-alpha-D-muramoyl-L-alanine + ADP + phosphate + H(+). The protein operates within cell wall biogenesis; peptidoglycan biosynthesis. Cell wall formation. The sequence is that of UDP-N-acetylmuramate--L-alanine ligase from Aliivibrio salmonicida (strain LFI1238) (Vibrio salmonicida (strain LFI1238)).